The following is a 282-amino-acid chain: Secretory carrier-associated membrane protein 3 (282 aa).

The interval methionine 1–histidine 36 is disordered. The Cytoplasmic portion of the chain corresponds to methionine 1 to glutamine 117. A coiled-coil region spans residues leucine 48–lysine 92. Transmembrane regions (helical) follow at residues tyrosine 118–threonine 138, valine 148–leucine 168, phenylalanine 185–alanine 205, and isoleucine 230–isoleucine 250. Residues glycine 251 to phenylalanine 282 are Cytoplasmic-facing.

This sequence belongs to the SCAMP family.

The protein localises to the cell membrane. The protein resides in the cytoplasmic vesicle. It localises to the secretory vesicle membrane. Its function is as follows. Probably involved in membrane trafficking. This Oryza sativa subsp. japonica (Rice) protein is Secretory carrier-associated membrane protein 3 (SCAMP3).